The primary structure comprises 315 residues: L-lactate dehydrogenase (315 aa).

NAD(+) contacts are provided by residues Val-17, Asp-38, Lys-43, Tyr-69, and 83–84; that span reads GA. Residues Gln-86, Arg-92, and 124–127 contribute to the substrate site; that span reads NPVD. NAD(+)-binding positions include 122–124 and Ser-147; that span reads ATN. 152–155 is a binding site for substrate; sequence DTAR. 2 residues coordinate beta-D-fructose 1,6-bisphosphate: Arg-157 and His-172. His-179 acts as the Proton acceptor in catalysis. The residue at position 224 (Tyr-224) is a Phosphotyrosine. Thr-233 contacts substrate.

Belongs to the LDH/MDH superfamily. LDH family. In terms of assembly, homotetramer.

The protein localises to the cytoplasm. It carries out the reaction (S)-lactate + NAD(+) = pyruvate + NADH + H(+). The protein operates within fermentation; pyruvate fermentation to lactate; (S)-lactate from pyruvate: step 1/1. Its activity is regulated as follows. Allosterically activated by fructose 1,6-bisphosphate (FBP). Catalyzes the conversion of lactate to pyruvate. In Bacillus pumilus (strain SAFR-032), this protein is L-lactate dehydrogenase.